The primary structure comprises 282 residues: Shikimate dehydrogenase (NADP(+)) (282 aa).

Residues 16-18 (SLS) and T63 each bind shikimate. Residue K67 is the Proton acceptor of the active site. Residues N88 and D103 each contribute to the shikimate site. NADP(+) contacts are provided by residues 128 to 132 (GAGGA) and G243.

It belongs to the shikimate dehydrogenase family. As to quaternary structure, homodimer.

The catalysed reaction is shikimate + NADP(+) = 3-dehydroshikimate + NADPH + H(+). It participates in metabolic intermediate biosynthesis; chorismate biosynthesis; chorismate from D-erythrose 4-phosphate and phosphoenolpyruvate: step 4/7. In terms of biological role, involved in the biosynthesis of the chorismate, which leads to the biosynthesis of aromatic amino acids. Catalyzes the reversible NADPH linked reduction of 3-dehydroshikimate (DHSA) to yield shikimate (SA). This is Shikimate dehydrogenase (NADP(+)) from Xylella fastidiosa (strain Temecula1 / ATCC 700964).